The chain runs to 80 residues: Conotoxin PnMKLT1-0121 (80 aa).

The signal sequence occupies residues 1 to 22; it reads MKLTCMMIVAVLFLTAWTFATA. The propeptide occupies 23–49; it reads DDPRNRLENFFSKTQHEMKNPEASKLN. Disulfide bonds link C52–C67, C59–C71, and C66–C75.

The protein belongs to the conotoxin O1 superfamily. In terms of tissue distribution, expressed by the venom duct.

The protein resides in the secreted. This is Conotoxin PnMKLT1-0121 from Conus pennaceus (Feathered cone).